The primary structure comprises 513 residues: Histone acetyltransferase KAT5 (513 aa).

The 58-residue stretch at 8–65 folds into the Tudor-knot domain; sequence IEGCRLPVLRRNQDNEDEWPLAEILSVKDISGRKLFYVHYIDFNKRLDEWVTHERLDL. An N6-acetyllysine modification is found at lysine 52. A disordered region spans residues 69–106; sequence QFPKKEAKTPTKNGLPGSRPGSPEREVPASAQASGKTL. At serine 86 the chain carries Phosphoserine. The residue at position 90 (serine 90) is a Phosphoserine; by CDK1 and CDK9. Lysine 104 and lysine 120 each carry N6-acetyllysine; by autocatalysis. Positions 122-217 are disordered; it reads REAIPGGEPD…SAPRMTGSLV (96 aa). Residues 133–144 show a composition bias toward polar residues; the sequence is PLSSSSCLQPNH. N6-acetyllysine; by autocatalysis is present on residues lysine 148, lysine 150, lysine 187, and lysine 189. A Phosphoserine modification is found at serine 199. The region spanning 227 to 504 is the MYST-type HAT domain; the sequence is TRMKNIECIE…IDSKCLHFTP (278 aa). The segment at 260–285 adopts a C2HC MYST-type zinc-finger fold; sequence LYLCEFCLKYGRSLKCLQRHLTKCDL. Position 327 is an N6-acetyllysine; by autocatalysis (lysine 327). Residues 368-513 are interaction with ATF2; it reads ACILTLPPYQ…PKDWSKRGKW (146 aa). Residues 370-372 and 377-383 each bind acetyl-CoA; these read ILT and QRRGYGK. The active-site Proton donor/acceptor is the glutamate 403. Residues serine 407 and serine 416 each coordinate acetyl-CoA. Lysine 430 is covalently cross-linked (Glycyl lysine isopeptide (Lys-Gly) (interchain with G-Cter in SUMO1); alternate). Lysine 430 participates in a covalent cross-link: Glycyl lysine isopeptide (Lys-Gly) (interchain with G-Cter in SUMO2); alternate. A Glycyl lysine isopeptide (Lys-Gly) (interchain with G-Cter in SUMO1) cross-link involves residue lysine 451.

The protein belongs to the MYST (SAS/MOZ) family. Component of the NuA4 histone acetyltransferase complex which contains the catalytic subunit KAT5/TIP60 and the subunits EP400, TRRAP/PAF400, BRD8/SMAP, EPC1, DMAP1/DNMAP1, RUVBL1/TIP49, RUVBL2, ING3, actin, ACTL6A/BAF53A, MORF4L1/MRG15, MORF4L2/MRGX, MRGBP, YEATS4/GAS41, VPS72/YL1 and MEAF6. KAT5/TIP60, EPC1, and ING3 together constitute a minimal HAT complex termed Piccolo NuA4. The NuA4 complex interacts with MYC. Interacts with ATM. Interacts with JADE1. Interacts with PLA2G4A/CPLA2, EDNRA and HDAC7. Interacts with the cytoplasmic tail of APP and APBB1/FE65. Interacts with TRIM24 and TRIM68. Forms a complex with SENP6 and UBE2I in response to UV irradiation. Identified in a complex with HINT1. Interacts with ATF2 and CUL3. Interacts with NR1D2 (via N-terminus). Component of a SWR1-like complex. Interacts with FOXP3. Interacts with ZBTB49. Interacts with SRF. Interacts with ATF3; promoting autoacetylation and deubiquitination by USP7. Interacts with EP300/p300; interaction promotes KAT5 autoacetylation. Interacts with PRKDC; interaction is impaired following KAT5 sumoylation. Interacts with GPR50. Interacts with NME3; this interaction enables recruitment of NME3 at DNA damage sites where it plays a role in the repair of DNA. Post-translationally, phosphorylated on Ser-86 and Ser-90; enhanced during G2/M phase. The phosphorylated form has a higher activity. Phosphorylation at Ser-90 by CDK1 or CDK9 is a prerequisite for phosphorylation at Ser-86 by GSK3. Phosphorylation at Ser-86 by GSK3 (GSK3A or GSK3B) activates acetyltransferase and acyltransferase activity. Phosphorylation at Ser-90 by CDK9 promotes KAT5 recruitment to chromatin. Phosphorylation by VRK1 following DNA damage promotes KAT5 association with chromatin and histone acetyltransferase activity. Autoacetylated. Autoacetylation is required for histone acetyltransferase activity. Autoacetylation at Lys-327 is facilitated by interaction with EP300/p300: it prevents ubiquitination and subsequent degradation by the proteasome and promotes acetylation of target proteins. Deacetylated by HDAC3 and SIRT1. Deacetylation by HDAC3 promotes its ubiquitination and cytoplasmic localization. In terms of processing, sumoylated by UBE2I at Lys-430 and Lys-451, leading to increase of its histone acetyltransferase activity in UV-induced DNA damage response, as well as its translocation to nuclear bodies. Sumoylation with SUMO2 by PIAS4 at Lys-430 promotes repair of DNA double-strand breaks (DSBs) via homologous recombination (HR). Sumoylation by PIAS4 impairs interaction with PRKDC, inhibiting non-homologous end joining (NHEJ)-mediated repair of DSBs, thereby facilitating HR. Desumoylated by SENP3. Post-translationally, ubiquitinated by MDM2, leading to its proteasome-dependent degradation. Ubiquitination is prevented by autoacetylation at Lys-327. Ubiquitinated following deacetylation by HDAC3, leading to cytoplasmic localization. Deubiquitinated by USP7 following interaction with ATF3, promoting its stabilization. As to expression, expressed in testis, heart, brain, kidney and liver. Weakly expressed in lung.

The protein localises to the nucleus. It is found in the chromosome. Its subcellular location is the cytoplasm. It localises to the centromere. The protein resides in the kinetochore. The protein localises to the cytoskeleton. It is found in the spindle pole. Its subcellular location is the nucleolus. It localises to the perinuclear region. The catalysed reaction is L-lysyl-[histone] + acetyl-CoA = N(6)-acetyl-L-lysyl-[histone] + CoA + H(+). It carries out the reaction L-lysyl-[protein] + acetyl-CoA = N(6)-acetyl-L-lysyl-[protein] + CoA + H(+). The enzyme catalyses (2E)-butenoyl-CoA + L-lysyl-[protein] = N(6)-(2E)-butenoyl-L-lysyl-[protein] + CoA + H(+). It catalyses the reaction 2-hydroxyisobutanoyl-CoA + L-lysyl-[protein] = N(6)-(2-hydroxyisobutanoyl)-L-lysyl-[protein] + CoA + H(+). The catalysed reaction is (S)-lactoyl-CoA + L-lysyl-[protein] = N(6)-[(S)-lactoyl]-L-lysyl-[protein] + CoA + H(+). Acyltransferase and acetyltransferase activities are activated by phosphorylation and autoacetylation. Autoacetylation activates the histone acetyltransferase activity. Its function is as follows. Catalytic subunit of the NuA4 histone acetyltransferase complex, a multiprotein complex involved in transcriptional activation of select genes principally by acetylation of nucleosomal histones H2A and H4. Histone acetylation alters nucleosome-DNA interactions and promotes interaction of the modified histones with other proteins which positively regulate transcription. The NuA4 histone acetyltransferase complex is required for the activation of transcriptional programs associated with proto-oncogene mediated growth induction, tumor suppressor mediated growth arrest and replicative senescence, apoptosis, and DNA repair. The NuA4 complex plays a direct role in repair of DNA double-strand breaks (DSBs) by promoting homologous recombination (HR): the complex inhibits TP53BP1 binding to chromatin via MBTD1, which recognizes and binds histone H4 trimethylated at 'Lys-20' (H4K20me), and KAT5 that catalyzes acetylation of 'Lys-15' of histone H2A (H2AK15ac), thereby blocking the ubiquitination mark required for TP53BP1 localization at DNA breaks. Also involved in DSB repair by mediating acetylation of 'Lys-5' of histone H2AX (H2AXK5ac), promoting NBN/NBS1 assembly at the sites of DNA damage. The NuA4 complex plays a key role in hematopoietic stem cell maintenance and is required to maintain acetylated H2A.Z/H2AZ1 at MYC target genes. The NuA4 complex is also required for spermatid development by promoting acetylation of histones: histone hyperacetylation is required for histone replacement during the transition from round to elongating spermatids. Component of a SWR1-like complex that specifically mediates the removal of histone H2A.Z/H2AZ1 from the nucleosome. Also acetylates non-histone proteins, such as BMAL1, ATM, AURKB, CHKA, CGAS, ERCC4/XPF, LPIN1, TP53/p53, NDC80/HEC1, NR1D2, RAN, SOX4, FOXP3, SQSTM1, ULK1 and RUBCNL/Pacer. Directly acetylates and activates ATM. Promotes nucleotide excision repair (NER) by mediating acetylation of ERCC4/XPF, thereby promoting formation of the ERCC4-ERCC1 complex. Relieves NR1D2-mediated inhibition of APOC3 expression by acetylating NR1D2. Acts as a regulator of regulatory T-cells (Treg) by catalyzing FOXP3 acetylation, thereby promoting FOXP3 transcriptional repressor activity. Involved in skeletal myoblast differentiation by mediating acetylation of SOX4. Catalyzes acetylation of APBB1/FE65, increasing its transcription activator activity. Promotes transcription elongation during the activation phase of the circadian cycle by catalyzing acetylation of BMAL1, promoting elongation of circadian transcripts. Together with GSK3 (GSK3A or GSK3B), acts as a regulator of autophagy: phosphorylated at Ser-86 by GSK3 under starvation conditions, leading to activate acetyltransferase activity and promote acetylation of key autophagy regulators, such as ULK1 and RUBCNL/Pacer. Acts as a regulator of the cGAS-STING innate antiviral response by catalyzing acetylation the N-terminus of CGAS, thereby promoting CGAS DNA-binding and activation. Also regulates lipid metabolism by mediating acetylation of CHKA or LPIN1. Promotes lipolysis of lipid droplets following glucose deprivation by mediating acetylation of isoform 1 of CHKA, thereby promoting monomerization of CHKA and its conversion into a tyrosine-protein kinase. Acts as a regulator of fatty-acid-induced triacylglycerol synthesis by catalyzing acetylation of LPIN1, thereby promoting the synthesis of diacylglycerol. In addition to protein acetyltransferase, can use different acyl-CoA substrates, such as (2E)-butenoyl-CoA (crotonyl-CoA), S-lactoyl-CoA (lactyl-CoA) and 2-hydroxyisobutanoyl-CoA (2-hydroxyisobutyryl-CoA), and is able to mediate protein crotonylation, lactylation and 2-hydroxyisobutyrylation, respectively. Acts as a key regulator of chromosome segregation and kinetochore-microtubule attachment during mitosis by mediating acetylation or crotonylation of target proteins. Catalyzes acetylation of AURKB at kinetochores, increasing AURKB activity and promoting accurate chromosome segregation in mitosis. Acetylates RAN during mitosis, promoting microtubule assembly at mitotic chromosomes. Acetylates NDC80/HEC1 during mitosis, promoting robust kinetochore-microtubule attachment. Catalyzes crotonylation of MAPRE1/EB1, thereby ensuring accurate spindle positioning in mitosis. Catalyzes lactylation of NBN/NBS1 in response to DNA damage, thereby promoting DNA double-strand breaks (DSBs) via homologous recombination (HR). The chain is Histone acetyltransferase KAT5 from Mus musculus (Mouse).